The chain runs to 424 residues: Serine--tRNA ligase (424 aa).

230–232 (TAE) lines the L-serine pocket. 261-263 (RSE) serves as a coordination point for ATP. Glu-284 contacts L-serine. 348–351 (EISS) is an ATP binding site. Ser-384 lines the L-serine pocket.

This sequence belongs to the class-II aminoacyl-tRNA synthetase family. Type-1 seryl-tRNA synthetase subfamily. As to quaternary structure, homodimer. The tRNA molecule binds across the dimer.

It is found in the cytoplasm. The enzyme catalyses tRNA(Ser) + L-serine + ATP = L-seryl-tRNA(Ser) + AMP + diphosphate + H(+). The catalysed reaction is tRNA(Sec) + L-serine + ATP = L-seryl-tRNA(Sec) + AMP + diphosphate + H(+). It participates in aminoacyl-tRNA biosynthesis; selenocysteinyl-tRNA(Sec) biosynthesis; L-seryl-tRNA(Sec) from L-serine and tRNA(Sec): step 1/1. Functionally, catalyzes the attachment of serine to tRNA(Ser). Is also able to aminoacylate tRNA(Sec) with serine, to form the misacylated tRNA L-seryl-tRNA(Sec), which will be further converted into selenocysteinyl-tRNA(Sec). The protein is Serine--tRNA ligase of Streptococcus pneumoniae serotype 4 (strain ATCC BAA-334 / TIGR4).